Here is a 493-residue protein sequence, read N- to C-terminus: Cytochrome P450 2E1 (493 aa).

298–303 (FAGTET) lines the substrate pocket. Cys-437 lines the heme pocket.

The protein belongs to the cytochrome P450 family. In terms of assembly, interacts with chaperones HSP70 and HSP90; this interaction is required for initial targeting to mitochondria. The cofactor is heme.

It is found in the endoplasmic reticulum membrane. Its subcellular location is the microsome membrane. It localises to the mitochondrion inner membrane. It carries out the reaction an organic molecule + reduced [NADPH--hemoprotein reductase] + O2 = an alcohol + oxidized [NADPH--hemoprotein reductase] + H2O + H(+). It catalyses the reaction (5Z,8Z,11Z)-eicosatrienoate + reduced [NADPH--hemoprotein reductase] + O2 = 19-hydroxy-(5Z,8Z,11Z)-eicosatrienoate + oxidized [NADPH--hemoprotein reductase] + H2O + H(+). The catalysed reaction is (5Z,8Z,11Z,14Z,17Z)-eicosapentaenoate + reduced [NADPH--hemoprotein reductase] + O2 = 19-hydroxy-(5Z,8Z,11Z,14Z,17Z)-eicosapentaenoate + oxidized [NADPH--hemoprotein reductase] + H2O + H(+). The enzyme catalyses (4Z,7Z,10Z,13Z,16Z,19Z)-docosahexaenoate + reduced [NADPH--hemoprotein reductase] + O2 = 21-hydroxy-(4Z,7Z,10Z,13Z,16Z,19Z)-docosahexaenoate + oxidized [NADPH--hemoprotein reductase] + H2O + H(+). It carries out the reaction dodecanoate + reduced [NADPH--hemoprotein reductase] + O2 = 11-hydroxydodecanoate + oxidized [NADPH--hemoprotein reductase] + H2O + H(+). It catalyses the reaction tetradecanoate + reduced [NADPH--hemoprotein reductase] + O2 = 13-hydroxytetradecanoate + oxidized [NADPH--hemoprotein reductase] + H2O + H(+). The catalysed reaction is 4-nitrophenol + NADPH + O2 + H(+) = 4-nitrocatechol + NADP(+) + H2O. The protein operates within lipid metabolism; fatty acid metabolism. The omega-1 hydroxylase activity is stimulated by cytochrome b5. A cytochrome P450 monooxygenase involved in the metabolism of fatty acids. Mechanistically, uses molecular oxygen inserting one oxygen atom into a substrate, and reducing the second into a water molecule, with two electrons provided by NADPH via cytochrome P450 reductase (NADPH--hemoprotein reductase). Catalyzes the hydroxylation of carbon-hydrogen bonds. Hydroxylates fatty acids specifically at the omega-1 position displaying the highest catalytic activity for saturated fatty acids. May be involved in the oxidative metabolism of xenobiotics. The polypeptide is Cytochrome P450 2E1 (Homo sapiens (Human)).